A 185-amino-acid chain; its full sequence is Threonylcarbamoyl-AMP synthase (185 aa).

In terms of domain architecture, YrdC-like spans 4–185 (DWRVQQVARV…LRSGEVIRPA (182 aa)).

Belongs to the SUA5 family. TsaC subfamily.

It is found in the cytoplasm. It catalyses the reaction L-threonine + hydrogencarbonate + ATP = L-threonylcarbamoyladenylate + diphosphate + H2O. Its function is as follows. Required for the formation of a threonylcarbamoyl group on adenosine at position 37 (t(6)A37) in tRNAs that read codons beginning with adenine. Catalyzes the conversion of L-threonine, HCO(3)(-)/CO(2) and ATP to give threonylcarbamoyl-AMP (TC-AMP) as the acyladenylate intermediate, with the release of diphosphate. This chain is Threonylcarbamoyl-AMP synthase, found in Stutzerimonas stutzeri (strain A1501) (Pseudomonas stutzeri).